The following is a 671-amino-acid chain: UvrABC system protein B (671 aa).

Residues 25 to 412 (EGIEAGLAHQ…AGRVVEQVVR (388 aa)) enclose the Helicase ATP-binding domain. 38-45 (GVTGSGKT) is an ATP binding site. A Beta-hairpin motif is present at residues 91-114 (YYDYYQPEAYVPSSDTFIEKDASI). One can recognise a Helicase C-terminal domain in the interval 429–582 (QVDDLLSEIT…QIAFNLANGI (154 aa)). Positions 601–623 (PGSRSKKRKGMAKAAEENARYEN) are disordered. Residues 614–623 (AAEENARYEN) show a composition bias toward basic and acidic residues. One can recognise a UVR domain in the interval 632 to 667 (TKRIRQLEEKMYQLARDLEFEAAAQMRDEITKLRER).

The protein belongs to the UvrB family. In terms of assembly, forms a heterotetramer with UvrA during the search for lesions. Interacts with UvrC in an incision complex.

Its subcellular location is the cytoplasm. Its function is as follows. The UvrABC repair system catalyzes the recognition and processing of DNA lesions. A damage recognition complex composed of 2 UvrA and 2 UvrB subunits scans DNA for abnormalities. Upon binding of the UvrA(2)B(2) complex to a putative damaged site, the DNA wraps around one UvrB monomer. DNA wrap is dependent on ATP binding by UvrB and probably causes local melting of the DNA helix, facilitating insertion of UvrB beta-hairpin between the DNA strands. Then UvrB probes one DNA strand for the presence of a lesion. If a lesion is found the UvrA subunits dissociate and the UvrB-DNA preincision complex is formed. This complex is subsequently bound by UvrC and the second UvrB is released. If no lesion is found, the DNA wraps around the other UvrB subunit that will check the other stand for damage. The sequence is that of UvrABC system protein B from Pseudomonas fluorescens (strain ATCC BAA-477 / NRRL B-23932 / Pf-5).